The following is a 256-amino-acid chain: UPF0246 protein SPO0106 (256 aa).

Belongs to the UPF0246 family.

The chain is UPF0246 protein SPO0106 from Ruegeria pomeroyi (strain ATCC 700808 / DSM 15171 / DSS-3) (Silicibacter pomeroyi).